The chain runs to 553 residues: Chaperonin GroEL 1 (553 aa).

ATP contacts are provided by residues 29-32, 86-90, glycine 413, 476-478, and aspartate 492; these read TIGP, DGTTT, and NAL. The disordered stretch occupies residues 521-542; sequence KPEPPAAPAPGGDPMGGMGGMG. Positions 533–542 are enriched in gly residues; it reads DPMGGMGGMG.

It belongs to the chaperonin (HSP60) family. As to quaternary structure, forms a cylinder of 14 subunits composed of two heptameric rings stacked back-to-back. Interacts with the co-chaperonin GroES.

Its subcellular location is the cytoplasm. The catalysed reaction is ATP + H2O + a folded polypeptide = ADP + phosphate + an unfolded polypeptide.. Functionally, together with its co-chaperonin GroES, plays an essential role in assisting protein folding. The GroEL-GroES system forms a nano-cage that allows encapsulation of the non-native substrate proteins and provides a physical environment optimized to promote and accelerate protein folding. The protein is Chaperonin GroEL 1 of Synechococcus sp. (strain WH7803).